The chain runs to 476 residues: MARMADSKLVAAAPRPGRVAGSFRDPSGQVFHFQDRILRTMDSAAAIEFASAERVMRQLVDEGRLVDFSDAEPSLHQLFQGSIARVLQHPLLEQITYPYEWSFAGLKAAALFHLQLQLDLLDQGFCLSDATAYNVQFEGSRPTFIDHLSIKPYRDGQLWYGHKQFCEQFLVPLLLRSVFDITHHSWYRGNLEGVPSADFVKLLSTRHWFSHKLFMHIILPAKLQSSRTSQTKVDLGDSRARRLPKDAFRAMLAQLYSWISGLKVDVGKQSVWQGYAANNTYTATQRSDKGQYVAEFVAQHKPRTIIDLGCNTGDFSYVALENGAEKAIGFDFDPHALDAAFDRSVQTSKNFLPLYLDARNPSPSQGWGERERQGFSSRFSADAVLALAFEHHLAIAHNVPLAEVVAWVTQVAPKGIIEFVPKEDETVRRMLAGREDIFSDYNEEAFASALSQKARVVNKHLIPGSKRTLYTFERSE.

Functionally, not known; does not seem to participate in nod factor synthesis but required for nodulation on some specific Medicago species such as M.littoralis. This Rhizobium meliloti (strain 1021) (Ensifer meliloti) protein is Nodulation protein NoeA (noeA).